Here is a 448-residue protein sequence, read N- to C-terminus: Signal recognition particle 54 kDa protein (448 aa).

GTP contacts are provided by residues 107 to 114 (GIQGSGKT), 189 to 193 (DTAGR), and 247 to 250 (TKLD).

It belongs to the GTP-binding SRP family. SRP54 subfamily. As to quaternary structure, part of the signal recognition particle protein translocation system, which is composed of SRP and FtsY. Archaeal SRP consists of a 7S RNA molecule of 300 nucleotides and two protein subunits: SRP54 and SRP19.

The protein localises to the cytoplasm. It carries out the reaction GTP + H2O = GDP + phosphate + H(+). Involved in targeting and insertion of nascent membrane proteins into the cytoplasmic membrane. Binds to the hydrophobic signal sequence of the ribosome-nascent chain (RNC) as it emerges from the ribosomes. The SRP-RNC complex is then targeted to the cytoplasmic membrane where it interacts with the SRP receptor FtsY. The protein is Signal recognition particle 54 kDa protein of Thermococcus gammatolerans (strain DSM 15229 / JCM 11827 / EJ3).